The primary structure comprises 240 residues: UDP-2,3-diacylglucosamine hydrolase (240 aa).

Residues D7, H9, D40, N78, and H113 each coordinate Mn(2+). 78–79 (NR) provides a ligand contact to substrate. Substrate contacts are provided by D121, S159, K166, and H194. H194 and H196 together coordinate Mn(2+).

This sequence belongs to the LpxH family. Requires Mn(2+) as cofactor.

It is found in the cell inner membrane. It carries out the reaction UDP-2-N,3-O-bis[(3R)-3-hydroxytetradecanoyl]-alpha-D-glucosamine + H2O = 2-N,3-O-bis[(3R)-3-hydroxytetradecanoyl]-alpha-D-glucosaminyl 1-phosphate + UMP + 2 H(+). It functions in the pathway glycolipid biosynthesis; lipid IV(A) biosynthesis; lipid IV(A) from (3R)-3-hydroxytetradecanoyl-[acyl-carrier-protein] and UDP-N-acetyl-alpha-D-glucosamine: step 4/6. Functionally, hydrolyzes the pyrophosphate bond of UDP-2,3-diacylglucosamine to yield 2,3-diacylglucosamine 1-phosphate (lipid X) and UMP by catalyzing the attack of water at the alpha-P atom. Involved in the biosynthesis of lipid A, a phosphorylated glycolipid that anchors the lipopolysaccharide to the outer membrane of the cell. In Pseudomonas putida (strain ATCC 47054 / DSM 6125 / CFBP 8728 / NCIMB 11950 / KT2440), this protein is UDP-2,3-diacylglucosamine hydrolase.